Here is a 437-residue protein sequence, read N- to C-terminus: Methylenetetrahydrofolate--tRNA-(uracil-5-)-methyltransferase TrmFO (437 aa).

8-13 lines the FAD pocket; the sequence is GAGLAG.

This sequence belongs to the MnmG family. TrmFO subfamily. It depends on FAD as a cofactor.

Its subcellular location is the cytoplasm. It carries out the reaction uridine(54) in tRNA + (6R)-5,10-methylene-5,6,7,8-tetrahydrofolate + NADH + H(+) = 5-methyluridine(54) in tRNA + (6S)-5,6,7,8-tetrahydrofolate + NAD(+). The enzyme catalyses uridine(54) in tRNA + (6R)-5,10-methylene-5,6,7,8-tetrahydrofolate + NADPH + H(+) = 5-methyluridine(54) in tRNA + (6S)-5,6,7,8-tetrahydrofolate + NADP(+). Its function is as follows. Catalyzes the folate-dependent formation of 5-methyl-uridine at position 54 (M-5-U54) in all tRNAs. In Desulfitobacterium hafniense (strain Y51), this protein is Methylenetetrahydrofolate--tRNA-(uracil-5-)-methyltransferase TrmFO.